Consider the following 443-residue polypeptide: Probable D-serine dehydratase (443 aa).

Residue Lys-118 is modified to N6-(pyridoxal phosphate)lysine.

Belongs to the serine/threonine dehydratase family. DsdA subfamily. The cofactor is pyridoxal 5'-phosphate.

The catalysed reaction is D-serine = pyruvate + NH4(+). This is Probable D-serine dehydratase from Vibrio campbellii (strain ATCC BAA-1116).